An 800-amino-acid polypeptide reads, in one-letter code: Metabotropic glutamate receptor-like protein C (800 aa).

The N-terminal stretch at 1 to 21 (MKMKIIFLILILIFSINIIKC) is a signal peptide. Topologically, residues 22–392 (DKEFKMLTLL…EVEFSQSLQY (371 aa)) are extracellular. N-linked (GlcNAc...) asparagine glycosylation is found at N69, N107, N166, N258, N276, N302, and N345. A helical transmembrane segment spans residues 393–413 (GFSITTGVLIAITIIMMLGIV). The Cytoplasmic portion of the chain corresponds to 414–426 (RYKSTPSIRSASP). A helical transmembrane segment spans residues 427–447 (IFLNFILAGGIIVYIGIIVWV). Topologically, residues 448–463 (GPANDHQCNARLWLVT) are extracellular. A helical membrane pass occupies residues 464 to 484 (LGFSTLIGSLVVKNFRIWLIF). Topologically, residues 485-499 (DNPELKSISITNYQL) are cytoplasmic. A helical membrane pass occupies residues 500–520 (FPWVGACLVINIILMSILTSV). The Extracellular portion of the chain corresponds to 521–551 (GDLREIDAQGIDSLGKYEFMKVCKMNSSGAS). N546 is a glycosylation site (N-linked (GlcNAc...) asparagine). A helical membrane pass occupies residues 552–572 (TLYTILAYFAALLLVGVFVSW). Residues 573–586 (KIRIVDIQEFNESK) are Cytoplasmic-facing. The helical transmembrane segment at 587–607 (AIANTLYAISFCLFVIVPLMI) threads the bilayer. Over 608 to 616 (SPQDKQSET) the chain is Extracellular. The chain crosses the membrane as a helical span at residues 617 to 637 (IVLCTAGLFITTAALLIIFTP). Over 638–800 (KFWRVFTLGD…NDTEEEDKNQ (163 aa)) the chain is Cytoplasmic. Disordered regions lie at residues 658–694 (QSNVATARAESSKSSSGPKLNRRGNLVSDDFTDTETS) and 718–800 (EFDD…DKNQ). Positions 718–732 (EFDDNNIEQDNDNDN) are enriched in acidic residues. Low complexity predominate over residues 733 to 774 (DNNNNNNNNNNNNNNNNNNNNNNNNNNNNNNNNNNNNNNNNN). Basic and acidic residues predominate over residues 781–791 (NDEKVEEKQQN).

This sequence in the N-terminal section; belongs to the BMP lipoprotein family. In the C-terminal section; belongs to the G-protein coupled receptor 3 family. GABA-B receptor subfamily.

Its subcellular location is the membrane. This Dictyostelium discoideum (Social amoeba) protein is Metabotropic glutamate receptor-like protein C (grlC).